A 578-amino-acid chain; its full sequence is Glutamate--tRNA ligase (578 aa).

Residues 97–107 (PNPDFVIHLGN) carry the 'HIGH' region motif.

It belongs to the class-I aminoacyl-tRNA synthetase family. Glutamate--tRNA ligase type 2 subfamily.

It is found in the cytoplasm. It carries out the reaction tRNA(Glu) + L-glutamate + ATP = L-glutamyl-tRNA(Glu) + AMP + diphosphate. Its function is as follows. Catalyzes the attachment of glutamate to tRNA(Glu) in a two-step reaction: glutamate is first activated by ATP to form Glu-AMP and then transferred to the acceptor end of tRNA(Glu). This Hyperthermus butylicus (strain DSM 5456 / JCM 9403 / PLM1-5) protein is Glutamate--tRNA ligase.